The following is a 357-amino-acid chain: Homeobox protein HMX3 (357 aa).

Disordered stretches follow at residues 1–58 and 129–229; these read MPEP…LFAP and LPRP…RKKK. Over residues 16–27 the composition is skewed to pro residues; the sequence is PQPPPPPPPAPK. 2 stretches are compositionally biased toward basic and acidic residues: residues 130-140 and 149-173; these read PRPEASEKALL and TDRD…KSPD. Residues serine 153 and serine 180 each carry the phosphoserine modification. The segment covering 191–209 has biased composition (low complexity); sequence AAPGAAGASVGAAAATPGA. Residues 210–223 are compositionally biased toward basic and acidic residues; the sequence is EDWKKGAESPEKKP. A DNA-binding region (homeobox) is located at residues 227–286; the sequence is KKKTRTVFSRSQVFQLESTFDMKRYLSSSERAGLAASLHLTETQVKIWFQNRRNKWKRQL.

It belongs to the HMX homeobox family.

The protein localises to the nucleus. In terms of biological role, transcription factor involved in specification of neuronal cell types and which is required for inner ear and hypothalamus development. Binds to the 5'-CAAGTG-3' core sequence. Controls semicircular canal formation in the inner ear. Also required for hypothalamic/pituitary axis of the CNS. The chain is Homeobox protein HMX3 (HMX3) from Homo sapiens (Human).